The following is a 231-amino-acid chain: Class II histocompatibility antigen, B-L beta chain (231 aa).

The segment at 1-89 is beta-1; sequence FFQWSATVEC…IVAPLTLQRR (89 aa). Residues 1–194 are Extracellular-facing; that stretch reads FFQWSATVEC…PGDVSRSKLL (194 aa). 2 disulfide bridges follow: C10–C74 and C111–C167. The N-linked (GlcNAc...) asparagine glycan is linked to N14. A beta-2 region spans residues 90 to 182; that stretch reads EPKVRIFALQ…SLQQPITQRW (93 aa). Residues 91–179 form the Ig-like C1-type domain; the sequence is PKVRIFALQS…EHTSLQQPIT (89 aa). A connecting peptide region spans residues 183-194; it reads EPPGDVSRSKLL. Residues 195–219 form a helical membrane-spanning segment; the sequence is MGVGGFVLGLVYLALGIFFFLCSKK. The Cytoplasmic segment spans residues 220–231; it reads GQPDPTSPGILN.

The protein belongs to the MHC class II family.

The protein resides in the membrane. The chain is Class II histocompatibility antigen, B-L beta chain from Gallus gallus (Chicken).